A 198-amino-acid polypeptide reads, in one-letter code: Probable chorismate pyruvate-lyase (198 aa).

R73, L111, and E172 together coordinate substrate.

This sequence belongs to the UbiC family.

The protein resides in the cytoplasm. The enzyme catalyses chorismate = 4-hydroxybenzoate + pyruvate. It participates in cofactor biosynthesis; ubiquinone biosynthesis. Removes the pyruvyl group from chorismate, with concomitant aromatization of the ring, to provide 4-hydroxybenzoate (4HB) for the ubiquinone pathway. This is Probable chorismate pyruvate-lyase from Burkholderia orbicola (strain AU 1054).